A 377-amino-acid chain; its full sequence is Geranylgeranyl transferase type-1 subunit beta (377 aa).

PFTB repeat units follow at residues 144-186, 193-234, 245-284, and 291-333; these read KEAC…YMLN, MKKA…CLMG, LNRI…KLLK, and FEKN…SLME. Residues 219-221 and 263-266 each bind geranylgeranyl diphosphate; these read HGG and RPNK. Zn(2+) is bound by residues aspartate 269 and cysteine 271. Position 272 to 275 (272 to 275) interacts with geranylgeranyl diphosphate; it reads YSFW. Histidine 321 is a Zn(2+) binding site.

The protein belongs to the protein prenyltransferase subunit beta family. In terms of assembly, heterodimer of FNTA and PGGT1B. PGGT1B mediates interaction with substrate peptides. Zn(2+) serves as cofactor. Mg(2+) is required as a cofactor.

It catalyses the reaction geranylgeranyl diphosphate + L-cysteinyl-[protein] = S-geranylgeranyl-L-cysteinyl-[protein] + diphosphate. In terms of biological role, catalyzes the transfer of a geranyl-geranyl moiety from geranyl-geranyl pyrophosphate to a cysteine at the fourth position from the C-terminus of proteins having the C-terminal sequence Cys-aliphatic-aliphatic-X. Known substrates include RAC1, RAC2, RAP1A and RAP1B. The protein is Geranylgeranyl transferase type-1 subunit beta (PGGT1B) of Bos taurus (Bovine).